The sequence spans 86 residues: Antifungal protein 2 (86 aa).

Residues Met1–Gly21 form the signal peptide. Cystine bridges form between Cys43–Cys57, Cys45–Cys74, and Cys49–Cys83. The segment at Asn44–Gly54 is lipid-binding. Residues Gly72 to Cys83 carry the Gamma-core motif.

The protein localises to the secreted. Cysteine-rich antifungal protein highly effective against yeasts such as clinically relevant Candida species, including the multidrug-resistant pathogen Candida auris. Does not cause metabolic inactivity and apoptosis induction, but the fungal cell-killing activity is connected to its pore-forming ability in the cell membrane. NFAP2 has a low potential to trigger resistance in C.albicans in vitro, and the developed tolerance to NFAP2 is not associated with severe phenotypic changes compared with development of resistance to generic fluconazole. In Neosartorya fischeri (strain ATCC 1020 / DSM 3700 / CBS 544.65 / FGSC A1164 / JCM 1740 / NRRL 181 / WB 181) (Aspergillus fischerianus), this protein is Antifungal protein 2.